The sequence spans 687 residues: MIDRYKHQQLRIGSVSPQQISAWATKILPNGEIVGEVTKPYTFHYKTNKPEKDGLFCERIFGPIKSGICACGNYRVIGDEKEDPKFCEQCGVEFVDSRIRRYQMGYIKLACPVTHVWYLKRLPSYIANLLDKPLKELEGLVYCDIESYPNFSFARPITKKPTFLRLRGLFEYEIQSWKYSIPLFFTTKGFDTFRNREIYTGAGAIREQLADLDLRIIIENSLVEWEELGEEGHTGNEWEDRKVGRRKDFLVRRVELAKHFIQSNIDPQWMVWCLLPVLPPELRPIIRIDGGKLMSSDISELYRKVIYRNNTLTDLLRTSKSTPGELVMCQEKLVQEAVDTLLDNGIRGQPMRDGHNKVYKSFSDVIEGKEGRFRETLLGKRVDYSGRSVIVVGPSLSLHRCGLPREIAIELFQTFVIRGLIRQHLASNIGVAKSKIREKEPIVWEILQEVMQGHPVLLNRAPTLHRLGIQAFQPVLVEGRAICLHPLVCKGFHADFDGDQMDFKVPLSLEAQVEARLLMFSHMNLLSPAIGDPISVPTQDMLIGLYVLTSGNHRGICVNRYNPCNRRNYQNQKRSDNSYYKYTKEPFFSNSYDAIGAYRQKRINLDSPLWLRWRLDQRVIASRETPIEVHYESLGTFYEIYGHYLIVRSLKKKILFIYIRTTVGHIALYREIEEAIQGFSRAYSYAT.

4 residues coordinate Zn(2+): C69, C71, C87, and C90. Positions 495, 497, and 499 each coordinate Mg(2+).

This sequence belongs to the RNA polymerase beta' chain family. RpoC1 subfamily. In terms of assembly, in plastids the minimal PEP RNA polymerase catalytic core is composed of four subunits: alpha, beta, beta', and beta''. When a (nuclear-encoded) sigma factor is associated with the core the holoenzyme is formed, which can initiate transcription. Requires Mg(2+) as cofactor. The cofactor is Zn(2+).

It is found in the plastid. The protein localises to the chloroplast. The enzyme catalyses RNA(n) + a ribonucleoside 5'-triphosphate = RNA(n+1) + diphosphate. In terms of biological role, DNA-dependent RNA polymerase catalyzes the transcription of DNA into RNA using the four ribonucleoside triphosphates as substrates. This chain is DNA-directed RNA polymerase subunit beta', found in Solanum tuberosum (Potato).